The primary structure comprises 115 residues: Iron-sulfur cluster insertion protein ErpA (115 aa).

Iron-sulfur cluster contacts are provided by cysteine 43, cysteine 107, and cysteine 109.

The protein belongs to the HesB/IscA family. Homodimer. It depends on iron-sulfur cluster as a cofactor.

In terms of biological role, required for insertion of 4Fe-4S clusters for at least IspG. The sequence is that of Iron-sulfur cluster insertion protein ErpA from Photorhabdus laumondii subsp. laumondii (strain DSM 15139 / CIP 105565 / TT01) (Photorhabdus luminescens subsp. laumondii).